Reading from the N-terminus, the 303-residue chain is Sulfate adenylyltransferase subunit 2 (303 aa).

The interval 281–303 (RQGRVIDHDSSGSMEKKKQEGYF) is disordered.

The protein belongs to the PAPS reductase family. CysD subfamily. As to quaternary structure, heterodimer composed of CysD, the smaller subunit, and CysN.

It carries out the reaction sulfate + ATP + H(+) = adenosine 5'-phosphosulfate + diphosphate. It functions in the pathway sulfur metabolism; hydrogen sulfide biosynthesis; sulfite from sulfate: step 1/3. Its function is as follows. With CysN forms the ATP sulfurylase (ATPS) that catalyzes the adenylation of sulfate producing adenosine 5'-phosphosulfate (APS) and diphosphate, the first enzymatic step in sulfur assimilation pathway. APS synthesis involves the formation of a high-energy phosphoric-sulfuric acid anhydride bond driven by GTP hydrolysis by CysN coupled to ATP hydrolysis by CysD. The polypeptide is Sulfate adenylyltransferase subunit 2 (Saccharophagus degradans (strain 2-40 / ATCC 43961 / DSM 17024)).